Here is a 103-residue protein sequence, read N- to C-terminus: Small ribosomal subunit protein uS10 (103 aa).

This sequence belongs to the universal ribosomal protein uS10 family. In terms of assembly, part of the 30S ribosomal subunit.

Involved in the binding of tRNA to the ribosomes. The polypeptide is Small ribosomal subunit protein uS10 (Campylobacter hominis (strain ATCC BAA-381 / DSM 21671 / CCUG 45161 / LMG 19568 / NCTC 13146 / CH001A)).